The chain runs to 506 residues: uncharacterized protein (506 aa).

Belongs to the Mg-chelatase subunits D/I family. ComM subfamily.

This is an uncharacterized protein from Salmonella typhimurium (strain LT2 / SGSC1412 / ATCC 700720).